The chain runs to 49 residues: MRVNITLACTECGDRNYISKKNKRNNPERIELKKYCPRLKRVTLHRETK.

This sequence belongs to the bacterial ribosomal protein bL33 family.

The polypeptide is Large ribosomal subunit protein bL33B (Bacillus cereus (strain ATCC 14579 / DSM 31 / CCUG 7414 / JCM 2152 / NBRC 15305 / NCIMB 9373 / NCTC 2599 / NRRL B-3711)).